The sequence spans 230 residues: Uracil-DNA glycosylase (230 aa).

The Proton acceptor role is filled by Asp-70.

It belongs to the uracil-DNA glycosylase (UDG) superfamily. UNG family.

It localises to the cytoplasm. It carries out the reaction Hydrolyzes single-stranded DNA or mismatched double-stranded DNA and polynucleotides, releasing free uracil.. Its function is as follows. Excises uracil residues from the DNA which can arise as a result of misincorporation of dUMP residues by DNA polymerase or due to deamination of cytosine. The chain is Uracil-DNA glycosylase from Pseudomonas syringae pv. tomato (strain ATCC BAA-871 / DC3000).